Reading from the N-terminus, the 401-residue chain is 1-deoxy-D-xylulose 5-phosphate reductoisomerase (401 aa).

Positions 11, 12, 13, 14, 38, 39, and 125 each coordinate NADPH. K126 is a binding site for 1-deoxy-D-xylulose 5-phosphate. E127 lines the NADPH pocket. Position 151 (D151) interacts with Mn(2+). 1-deoxy-D-xylulose 5-phosphate contacts are provided by S152, E153, S179, and H202. E153 contributes to the Mn(2+) binding site. An NADPH-binding site is contributed by G208. The 1-deoxy-D-xylulose 5-phosphate site is built by S215, N220, K221, and E224. Residue E224 participates in Mn(2+) binding.

It belongs to the DXR family. The cofactor is Mg(2+). It depends on Mn(2+) as a cofactor.

The catalysed reaction is 2-C-methyl-D-erythritol 4-phosphate + NADP(+) = 1-deoxy-D-xylulose 5-phosphate + NADPH + H(+). The protein operates within isoprenoid biosynthesis; isopentenyl diphosphate biosynthesis via DXP pathway; isopentenyl diphosphate from 1-deoxy-D-xylulose 5-phosphate: step 1/6. Catalyzes the NADPH-dependent rearrangement and reduction of 1-deoxy-D-xylulose-5-phosphate (DXP) to 2-C-methyl-D-erythritol 4-phosphate (MEP). This is 1-deoxy-D-xylulose 5-phosphate reductoisomerase from Paraburkholderia phymatum (strain DSM 17167 / CIP 108236 / LMG 21445 / STM815) (Burkholderia phymatum).